The chain runs to 287 residues: Tetraspanning orphan receptor (287 aa).

Residues 1-27 are Extracellular-facing; it reads MSPSLVSDTQKHERGSHGVKIKHFSPY. The helical transmembrane segment at 28–48 threads the bilayer; the sequence is IAVCVTTFSLAFCCFMVHGAI. Residues 49 to 55 lie on the Cytoplasmic side of the membrane; the sequence is TRQPTHL. Residues 56-76 form a helical membrane-spanning segment; it reads LPFFFIQVFDLIICLIHILGF. The Extracellular portion of the chain corresponds to 77 to 91; the sequence is MSSTSDIRLVIHTKT. The helical transmembrane segment at 92 to 114 threads the bilayer; it reads GPIYIKSTGLTFIILSISRMMLA. Topologically, residues 115-287 are cytoplasmic; that stretch reads FKAYCLGMVW…NASSNAHSSC (173 aa). Residues 165-190 are disordered; that stretch reads NNSIGNSGSPNEPNTRPRPDTITYDP.

As to quaternary structure, interacts (via N-terminal extracellular domain) with human C2a.

The protein resides in the cell membrane. Its function is as follows. Cell surface receptor that binds to human complement C2a protein. This results in inhibition of the classical and lectin pathways of complement activation, probably due to interference with binding of C2a to C4b and interference with cleavage by C1 or MASP2 such that C3 convertase cannot be formed. This infers resistance to complement-mediated cell lysis, allowing parasite survival and infection. The chain is Tetraspanning orphan receptor from Trypanosoma cruzi.